The sequence spans 194 residues: Imidazoleglycerol-phosphate dehydratase (194 aa).

This sequence belongs to the imidazoleglycerol-phosphate dehydratase family.

Its subcellular location is the cytoplasm. The enzyme catalyses D-erythro-1-(imidazol-4-yl)glycerol 3-phosphate = 3-(imidazol-4-yl)-2-oxopropyl phosphate + H2O. The protein operates within amino-acid biosynthesis; L-histidine biosynthesis; L-histidine from 5-phospho-alpha-D-ribose 1-diphosphate: step 6/9. The protein is Imidazoleglycerol-phosphate dehydratase of Bacillus anthracis (strain A0248).